A 439-amino-acid polypeptide reads, in one-letter code: Rhodopsin (439 aa).

A glycan (N-linked (GlcNAc...) asparagine) is linked at N1. The Extracellular segment spans residues 1-26 (NETWWYNPYMDIHSHWKQFDQVPAAV). Residues 27-51 (YYSLGIFIAICGIIGCAGNGIVIYL) form a helical membrane-spanning segment. At 52–63 (FTKTKSLQTPAN) the chain is on the cytoplasmic side. The chain crosses the membrane as a helical span at residues 64–90 (MFIINLAFSDFTFSLVNGFPMMTISCF). The Extracellular segment spans residues 91–102 (LKHWVFGQAACK). C101 and C179 form a disulfide bridge. Residues 103-124 (VYGLIGGIFGLTSIMTMTMISI) traverse the membrane as a helical segment. Residues 125–127 (DRY) carry the 'Ionic lock' involved in activated form stabilization motif. Residues 125–144 (DRYNVIRRPMSASKKMSHRK) lie on the Cytoplasmic side of the membrane. The helical transmembrane segment at 145-165 (AFIMIVFVWIWSTIWAIGPIF) threads the bilayer. Residues 166-192 (GWGAYQLEGVLCNCSFDYITRDASTRS) are Extracellular-facing. The chain crosses the membrane as a helical span at residues 193–217 (NIVCMYIFAFMFPIVVIFFCYFNIV). Residues 218–254 (MSVSNHEKEMAAMAKRLNAKELRKAQAGASAEMKLAK) are Cytoplasmic-facing. Residues 255 to 276 (ISIVIVTQSLLSWSPYAIVALL) traverse the membrane as a helical segment. Residues 277 to 286 (AQFGPIEWVT) lie on the Extracellular side of the membrane. The chain crosses the membrane as a helical span at residues 287 to 308 (PYAAQLPVMFAKASAIHNPMIY). K298 bears the N6-(retinylidene)lysine mark. Residues 309 to 439 (SVSHPKFREA…PQAAPPQGVD (131 aa)) are Cytoplasmic-facing. 2 S-palmitoyl cysteine lipidation sites follow: C329 and C330. Low complexity predominate over residues 369 to 381 (MMQKMQAQQQQQP). The interval 369–439 (MMQKMQAQQQ…PQAAPPQGVD (71 aa)) is disordered. Residues 382–433 (AYPPQGYPPQGYPPPPPQGYPPQGYPPQGYPPQGYPPPPQGPPPQGPPPQAA) are compositionally biased toward pro residues.

The protein belongs to the G-protein coupled receptor 1 family. Opsin subfamily. Post-translationally, contains one covalently linked retinal chromophore. Upon light absorption, the covalently bound 11-cis-retinal is converted to all-trans-retinal. After hydrolysis of the Schiff base and release of the covalently bound all-trans-retinal, active rhodopsin is regenerated by binding of a fresh molecule of 11-cis-retinal.

It localises to the cell projection. The protein resides in the rhabdomere membrane. Photoreceptor required for image-forming vision at low light intensity. Light-induced isomerization of 11-cis to all-trans retinal triggers a conformational change that activates signaling via G-proteins. Signaling mediates the activation of phospholipase C. Subsequent receptor phosphorylation mediates displacement of the bound G-protein alpha subunit by arrestin and terminates signaling. The protein is Rhodopsin (RHO) of Alloteuthis subulata (Squid).